A 231-amino-acid chain; its full sequence is Large ribosomal subunit protein uL1 (231 aa).

Belongs to the universal ribosomal protein uL1 family. As to quaternary structure, part of the 50S ribosomal subunit.

Binds directly to 23S rRNA. The L1 stalk is quite mobile in the ribosome, and is involved in E site tRNA release. Its function is as follows. Protein L1 is also a translational repressor protein, it controls the translation of the L11 operon by binding to its mRNA. This Allorhizobium ampelinum (strain ATCC BAA-846 / DSM 112012 / S4) (Agrobacterium vitis (strain S4)) protein is Large ribosomal subunit protein uL1.